A 118-amino-acid polypeptide reads, in one-letter code: Small ribosomal subunit protein uS13 (118 aa).

The interval 94–118 (GLPVRGQRTRTNARTRKGPRKAIKK) is disordered.

Belongs to the universal ribosomal protein uS13 family. As to quaternary structure, part of the 30S ribosomal subunit. Forms a loose heterodimer with protein S19. Forms two bridges to the 50S subunit in the 70S ribosome.

In terms of biological role, located at the top of the head of the 30S subunit, it contacts several helices of the 16S rRNA. In the 70S ribosome it contacts the 23S rRNA (bridge B1a) and protein L5 of the 50S subunit (bridge B1b), connecting the 2 subunits; these bridges are implicated in subunit movement. Contacts the tRNAs in the A and P-sites. The sequence is that of Small ribosomal subunit protein uS13 from Thiobacillus denitrificans (strain ATCC 25259 / T1).